Here is a 636-residue protein sequence, read N- to C-terminus: MNTSVDKILSQTAEVDQASVQPFTGSQKIYVQGSRNDIRVPMREISLDDTPTDFGGEKNPPVRVYDTSGPYTDPEVAIDLRAGLPDIRSAWIEERGDTEILSDSQSIFTRERLDDPKLAHLRFNLTRKARRAKPGMNVSQMHYAKKGIITPEMEYIAIRENMALAQVRELGVLNQQHPGMSFGANIPGEITPEFVRSEVARGRAIIPANINHVELEPMIIGRNFLVKINGNIGNSALGSSIEEEVEKLTWGARWGADTVMDLSTGKNIHETREWIIRNSHVPIGTVPIYQALEKVNGIAENLTWEIFRDTLIEQAEQGVDYFTIHAGVLLRYVPLTAKRVTGIVSRGGSIMAKWCLAHHRENFLYTHFEEICEIMKAYDVSFSLGDGLRPGSIADANDAAQFGELETLGELTEIAWKHDVQTMIEGPGHVPMHMIKENMDKQLEVCKEAPFYTLGPLTTDIAPGYDHITSGIGAAMIGWYGCAMLCYVTPKEHLGLPNKKDVKEGIITYKIAAHAADLAKGHPGAQLRDNALSKARFEFRWEDQFNLGLDPDTARAYHDETLPKESAKVAHFCSMCGPKFCSMKITQEVRDYAAQQGVNVEGISEDQLVKMIDVEAEMQEKAREFIEQGAELYHKV.

The interval 48-70 is disordered; the sequence is DDTPTDFGGEKNPPVRVYDTSGP. Residues N231, M260, Y289, H325, 345 to 347, 386 to 389, and E425 contribute to the substrate site; these read SRG and DGLR. Residue H429 participates in Zn(2+) binding. Residue Y452 coordinates substrate. H493 serves as a coordination point for Zn(2+). Residues C573, C576, and C581 each coordinate [4Fe-4S] cluster.

Belongs to the ThiC family. As to quaternary structure, homodimer. The cofactor is [4Fe-4S] cluster.

The catalysed reaction is 5-amino-1-(5-phospho-beta-D-ribosyl)imidazole + S-adenosyl-L-methionine = 4-amino-2-methyl-5-(phosphooxymethyl)pyrimidine + CO + 5'-deoxyadenosine + formate + L-methionine + 3 H(+). It participates in cofactor biosynthesis; thiamine diphosphate biosynthesis. In terms of biological role, catalyzes the synthesis of the hydroxymethylpyrimidine phosphate (HMP-P) moiety of thiamine from aminoimidazole ribotide (AIR) in a radical S-adenosyl-L-methionine (SAM)-dependent reaction. This chain is Phosphomethylpyrimidine synthase, found in Cellvibrio japonicus (strain Ueda107) (Pseudomonas fluorescens subsp. cellulosa).